Here is a 101-residue protein sequence, read N- to C-terminus: Small ribosomal subunit protein uS14 (101 aa).

It belongs to the universal ribosomal protein uS14 family. In terms of assembly, part of the 30S ribosomal subunit. Contacts proteins S3 and S10.

Its function is as follows. Binds 16S rRNA, required for the assembly of 30S particles and may also be responsible for determining the conformation of the 16S rRNA at the A site. The chain is Small ribosomal subunit protein uS14 from Aromatoleum aromaticum (strain DSM 19018 / LMG 30748 / EbN1) (Azoarcus sp. (strain EbN1)).